Consider the following 129-residue polypeptide: Large ribosomal subunit protein uL22 (129 aa).

The protein belongs to the universal ribosomal protein uL22 family. In terms of assembly, part of the 50S ribosomal subunit.

This protein binds specifically to 23S rRNA; its binding is stimulated by other ribosomal proteins, e.g. L4, L17, and L20. It is important during the early stages of 50S assembly. It makes multiple contacts with different domains of the 23S rRNA in the assembled 50S subunit and ribosome. In terms of biological role, the globular domain of the protein is located near the polypeptide exit tunnel on the outside of the subunit, while an extended beta-hairpin is found that lines the wall of the exit tunnel in the center of the 70S ribosome. This is Large ribosomal subunit protein uL22 from Beijerinckia indica subsp. indica (strain ATCC 9039 / DSM 1715 / NCIMB 8712).